Reading from the N-terminus, the 108-residue chain is Class I hydrophobin hgfII (108 aa).

The first 19 residues, 1–19, serve as a signal peptide directing secretion; it reads MFSRIAAVSFLALPLLAAA. Intrachain disulfides connect Cys28/Cys89, Cys35/Cys83, Cys36/Cys69, and Cys90/Cys103. The N-linked (GlcNAc...) asparagine glycan is linked to Asn92.

Belongs to the fungal hydrophobin family. Self-assembles to form functional amyloid fibrils called rodlets with a diameter of 15-30 nm. Self-assembly into fibrillar rodlets occurs spontaneously at hydrophobic:hydrophilic interfaces and the rodlets further associate laterally to form amphipathic monolayers. In terms of tissue distribution, highky expressed in hyphae cultured in liquid medium.

It localises to the secreted. The protein resides in the cell wall. Aerial growth, conidiation, and dispersal of filamentous fungi in the environment rely upon a capability of their secreting small amphipathic proteins called hydrophobins (HPBs) with low sequence identity. Class I can self-assemble into an outermost layer of rodlet bundles on aerial cell surfaces, conferring cellular hydrophobicity that supports fungal growth, development and dispersal; whereas Class II form highly ordered films at water-air interfaces through intermolecular interactions but contribute nothing to the rodlet structure. HgfII is a class I hydrophobin that is involved in cell surface hydrophobicity and might play a key role during the growth and development of hyphae cultured in liquid medium. In Grifola frondosa (Maitake), this protein is Class I hydrophobin hgfII.